The sequence spans 194 residues: Small ribosomal subunit protein uS4c (194 aa).

Positions Met-82–Asn-143 constitute an S4 RNA-binding domain.

The protein belongs to the universal ribosomal protein uS4 family. Part of the 30S ribosomal subunit. Contacts protein S5. The interaction surface between S4 and S5 is involved in control of translational fidelity.

It localises to the plastid. It is found in the chloroplast. Functionally, one of the primary rRNA binding proteins, it binds directly to 16S rRNA where it nucleates assembly of the body of the 30S subunit. In terms of biological role, with S5 and S12 plays an important role in translational accuracy. This Sisyrinchium striatum (Satin flower) protein is Small ribosomal subunit protein uS4c (rps4).